A 107-amino-acid polypeptide reads, in one-letter code: UPF0473 protein Ldb1604 (107 aa).

It belongs to the UPF0473 family.

The chain is UPF0473 protein Ldb1604 from Lactobacillus delbrueckii subsp. bulgaricus (strain ATCC 11842 / DSM 20081 / BCRC 10696 / JCM 1002 / NBRC 13953 / NCIMB 11778 / NCTC 12712 / WDCM 00102 / Lb 14).